The primary structure comprises 204 residues: LexA repressor (204 aa).

Positions 27-47 (VREIGEAVGLASSSTVHGHLA) form a DNA-binding region, H-T-H motif. Residues Ser126 and Lys164 each act as for autocatalytic cleavage activity in the active site.

Belongs to the peptidase S24 family. Homodimer.

The enzyme catalyses Hydrolysis of Ala-|-Gly bond in repressor LexA.. Represses a number of genes involved in the response to DNA damage (SOS response), including recA and lexA. In the presence of single-stranded DNA, RecA interacts with LexA causing an autocatalytic cleavage which disrupts the DNA-binding part of LexA, leading to derepression of the SOS regulon and eventually DNA repair. The protein is LexA repressor of Listeria welshimeri serovar 6b (strain ATCC 35897 / DSM 20650 / CCUG 15529 / CIP 8149 / NCTC 11857 / SLCC 5334 / V8).